We begin with the raw amino-acid sequence, 696 residues long: SEC14 domain and spectrin repeat-containing protein 1 (696 aa).

Positions Met1 to His153 constitute a CRAL-TRIO domain. Spectrin repeat units follow at residues Thr272–Gln378, Leu381–Leu494, and Phe500–Glu602.

The protein belongs to the SOLO family.

Its function is as follows. May act as the primary docking protein directing membrane turnover and assembly of the transient receptor potential channels trpc4 and trpc5. Binds phospholipids. This Xenopus tropicalis (Western clawed frog) protein is SEC14 domain and spectrin repeat-containing protein 1 (sestd1).